The sequence spans 406 residues: Arginine deiminase (406 aa).

The active-site Amidino-cysteine intermediate is the Cys-396.

This sequence belongs to the arginine deiminase family.

It localises to the cytoplasm. It carries out the reaction L-arginine + H2O = L-citrulline + NH4(+). The protein operates within amino-acid degradation; L-arginine degradation via ADI pathway; carbamoyl phosphate from L-arginine: step 1/2. The polypeptide is Arginine deiminase (Aliivibrio salmonicida (strain LFI1238) (Vibrio salmonicida (strain LFI1238))).